The sequence spans 131 residues: Profilin-9 (131 aa).

A disulfide bond links Cys-13 and Cys-115. Residues 81-97 (AVIRGKKGSGGITVKKT) carry the Involved in PIP2 interaction motif. Position 111 is a phosphothreonine (Thr-111).

This sequence belongs to the profilin family. As to quaternary structure, occurs in many kinds of cells as a complex with monomeric actin in a 1:1 ratio. In terms of processing, phosphorylated by MAP kinases.

It is found in the cytoplasm. It localises to the cytoskeleton. In terms of biological role, binds to actin and affects the structure of the cytoskeleton. At high concentrations, profilin prevents the polymerization of actin, whereas it enhances it at low concentrations. The protein is Profilin-9 of Zea mays (Maize).